Consider the following 282-residue polypeptide: MTLKKLNPITPGSRHRVIIDYSKQSKLLKPSTKNAPLKKNTLKIMTTEGRNFHGVITTRHRGGGHKRLYRIIEFNRNKLGVSGKVNNIEYDPNRTANIARIHYQDGSKKYIIHPEGLEKGANIIASAIAPLSIGNSLPLKSIPIGTEIHNIEFHPGKGGQLARSAGTGALVSYKTNSFVTLKLPSGRSRYFDNKCWATIGKVSKAEHKFINLGKAGRSRWLGIRPTVRGSAQNAVDHPHGGGEGKAPIGRIPSTPWGKPALGIKTRHRHKWSERFFKGLKKK.

The interval 230 to 261 is disordered; it reads SAQNAVDHPHGGGEGKAPIGRIPSTPWGKPAL.

It belongs to the universal ribosomal protein uL2 family. Part of the 50S ribosomal subunit.

Its subcellular location is the plastid. The chain is Large ribosomal subunit protein uL2c (rpl2) from Helicosporidium sp. subsp. Simulium jonesii (Green alga).